We begin with the raw amino-acid sequence, 63 residues long: Large ribosomal subunit protein bL32 (63 aa).

The disordered stretch occupies residues 1–22 (MANPKAKMSKSRRDKRRAQFNA). Residues 7–18 (KMSKSRRDKRRA) show a composition bias toward basic residues.

It belongs to the bacterial ribosomal protein bL32 family.

The polypeptide is Large ribosomal subunit protein bL32 (Chlorobium limicola (strain DSM 245 / NBRC 103803 / 6330)).